A 251-amino-acid chain; its full sequence is MSLLLENLIEEDTIFFAGSISEYDDLQMVIAGAKSKFPRSMLSIFNIVPRTMSKYELELIHNENITGAMFTTMYNIRNNLGLGDDKLTIEAIENYFLDPNNEVMPLIINNTDMTAVIPKKSGRRKNKNMVIFRQGSSPILCIFETRKKINIYKENMESASTEYTPIGDNKALISKYAGINILNVYSPSTSIRLNAIYGFTNKNKLEKLSTNKELESYSSSPLQEPIRLNDFLGLLECVKKNIPLTDIPTKD.

Residues 1–32 constitute a propeptide, removed by core protease OPG083/I7; it reads MSLLLENLIEEDTIFFAGSISEYDDLQMVIAG.

The protein belongs to the orthopoxvirus OPG098 family. Post-translationally, undergoes morphogenesis-associated proteolysis which cleaves the 28 kDa to a 25-kDa product. Proteolytic cleavage of major core proteins P4a (OPG136/A10L), P4b (OPG129/A3L), and VP8 (OPG098/L4R), which occurs at a late stage of core formation, is required for production of infectious mature virions (MV).

The protein resides in the virion. The protein localises to the host cytoplasm. Its function is as follows. Major core structural protein. The polypeptide is Core protein VP8 (OPG098) (Vaccinia virus (strain Western Reserve) (VACV)).